Consider the following 132-residue polypeptide: Small ribosomal subunit protein uS8 (132 aa).

The protein belongs to the universal ribosomal protein uS8 family. As to quaternary structure, part of the 30S ribosomal subunit. Contacts proteins S5 and S12.

Its function is as follows. One of the primary rRNA binding proteins, it binds directly to 16S rRNA central domain where it helps coordinate assembly of the platform of the 30S subunit. The polypeptide is Small ribosomal subunit protein uS8 (Kocuria rhizophila (strain ATCC 9341 / DSM 348 / NBRC 103217 / DC2201)).